The chain runs to 833 residues: Leucine--tRNA ligase (833 aa).

Residues 41–52 carry the 'HIGH' region motif; that stretch reads PYPSGAGLHVGH. The short motif at 610–614 is the 'KMSKS' region element; the sequence is KMSKS. Position 613 (K613) interacts with ATP.

It belongs to the class-I aminoacyl-tRNA synthetase family.

It is found in the cytoplasm. It catalyses the reaction tRNA(Leu) + L-leucine + ATP = L-leucyl-tRNA(Leu) + AMP + diphosphate. This is Leucine--tRNA ligase from Streptococcus mutans serotype c (strain ATCC 700610 / UA159).